The following is a 350-amino-acid chain: Sulfate/thiosulfate import ATP-binding protein cysA (350 aa).

Positions 3-237 (IEVRNLSKRF…PATPFVYGFL (235 aa)) constitute an ABC transporter domain. Residue 35–42 (GPSGCGKT) coordinates ATP.

The protein belongs to the ABC transporter superfamily. Sulfate/tungstate importer (TC 3.A.1.6) family.

The protein localises to the mitochondrion. It catalyses the reaction sulfate(out) + ATP + H2O = sulfate(in) + ADP + phosphate + H(+). It carries out the reaction thiosulfate(out) + ATP + H2O = thiosulfate(in) + ADP + phosphate + H(+). In terms of biological role, part of the ABC transporter complex involved in sulfate/thiosulfate import. Responsible for energy coupling to the transport system. This chain is Sulfate/thiosulfate import ATP-binding protein cysA (CYSA), found in Cucumis sativus (Cucumber).